The sequence spans 1656 residues: Probable phospholipid-transporting ATPase DNF3 (1656 aa).

Topologically, residues 1 to 164 are lumenal; it reads MGIADGQRRR…PRQLYAQFSK (164 aa). Residues 36-74 are disordered; sequence ELEDINESKTFSGSDNNDKDDRDETSGNYAAEEDYEMEE. The span at 51–60 shows a compositional bias: basic and acidic residues; that stretch reads NNDKDDRDET. A helical transmembrane segment spans residues 165–185; sequence LANTYFFIVAVLQMIPGWSTT. Residues 186-451 lie on the Cytoplasmic side of the membrane; it reads GTYTTIIPLC…RTKAPKLQRK (266 aa). A helical transmembrane segment spans residues 452 to 472; that stretch reads INMIIVFMVFVVATISLFSYL. The Lumenal segment spans residues 473–495; that stretch reads GHVLHKKKYIDQNKAWYLFQADA. Residues 496-516 traverse the membrane as a helical segment; that stretch reads GVAPTIMSFIIMYNTVIPLSL. At 517–1157 the chain is on the cytoplasmic side; that stretch reads YVTMEIIKVV…ISKMNAVSQE (641 aa). Catalysis depends on Asp-566, which acts as the 4-aspartylphosphate intermediate. 3 residues coordinate ATP: Asp-566, Lys-567, and Thr-568. Asp-566 lines the Mg(2+) pocket. Thr-568 contacts Mg(2+). Position 627 is a phosphoserine (Ser-627). Residues Glu-765, Phe-813, Ser-815, Lys-818, Lys-838, Arg-1034, Thr-1035, Thr-1114, Gly-1115, Asp-1116, 1167 to 1174, Arg-1202, and Lys-1208 each bind ATP; that span reads VVVIDGAT. The helical transmembrane segment at 1158–1178 threads the bilayer; the sequence is VDSGNIAHCVVVIDGATMAMF. At 1179 to 1318 the chain is on the lumenal side; the sequence is EGNPTYMSVF…MFSGSSLYEP (140 aa). A Mg(2+)-binding site is contributed by Asp-1229. ATP is bound by residues Asn-1232 and Asp-1233. Residues 1319–1339 traverse the membrane as a helical segment; it reads WSLSMFNTLFTSLPVLCIGMF. The Cytoplasmic portion of the chain corresponds to 1340-1365; it reads EKDLKPMTLLTVPELYSYGRLSQGFN. A helical transmembrane segment spans residues 1366–1386; the sequence is WLIFMEWVILATTNSLIITFL. Over 1387–1395 the chain is Lumenal; the sequence is NVVMWGMSS. The chain crosses the membrane as a helical span at residues 1396–1416; it reads LSDNTMYPLGLINFTAIVALI. Over 1417–1432 the chain is Cytoplasmic; it reads NVKSQFVEMHNRNWLA. The chain crosses the membrane as a helical span at residues 1433–1453; the sequence is FTSVVLSCGGWLVWCCALPIL. Residues 1454–1473 are Lumenal-facing; the sequence is NNTDQIYDVAYGFYNHFGKD. Residues 1474–1494 traverse the membrane as a helical segment; sequence ITFWCTSLVLALLPITLDIVY. The Cytoplasmic segment spans residues 1495–1656; it reads KTFKVMIWPS…IIQARLKDLE (162 aa). The interval 1554-1576 is disordered; sequence PRTNSRASAKTHNSSIYSMSNGN.

Belongs to the cation transport ATPase (P-type) (TC 3.A.3) family. Type IV subfamily. As to quaternary structure, component of a flippase complex consisting of DNF3 and YNR048W/CRF1. Interacts with YNR048W/CRF1; the interaction is direct and required for proper expression and endoplasmic reticulum (ER) export of either partner. Mg(2+) is required as a cofactor.

Its subcellular location is the golgi apparatus. The protein localises to the trans-Golgi network membrane. It is found in the endosome membrane. The enzyme catalyses ATP + H2O + phospholipidSide 1 = ADP + phosphate + phospholipidSide 2.. It catalyses the reaction a 1,2-diacyl-sn-glycero-3-phosphocholine(out) + ATP + H2O = a 1,2-diacyl-sn-glycero-3-phosphocholine(in) + ADP + phosphate + H(+). The catalysed reaction is a 1,2-diacyl-sn-glycero-3-phosphoethanolamine(out) + ATP + H2O = a 1,2-diacyl-sn-glycero-3-phosphoethanolamine(in) + ADP + phosphate + H(+). Catalytic component of a P4-ATPase flippase complex which catalyzes the hydrolysis of ATP coupled to the transport of phosphatidylcholine and small amounts of phosphatidylethanolamine from the lumen to the cytosolic leaflet of the trans-Golgi network and ensures the maintenance of asymmetric distribution of phospholipids. May be involved in transport from early endosomes to the trans-Golgi network (TGN). In Saccharomyces cerevisiae (strain ATCC 204508 / S288c) (Baker's yeast), this protein is Probable phospholipid-transporting ATPase DNF3 (DNF3).